Consider the following 103-residue polypeptide: Large ribosomal subunit protein bL21 (103 aa).

Belongs to the bacterial ribosomal protein bL21 family. In terms of assembly, part of the 50S ribosomal subunit. Contacts protein L20.

This protein binds to 23S rRNA in the presence of protein L20. In Aromatoleum aromaticum (strain DSM 19018 / LMG 30748 / EbN1) (Azoarcus sp. (strain EbN1)), this protein is Large ribosomal subunit protein bL21.